Consider the following 334-residue polypeptide: Holliday junction branch migration complex subunit RuvB (334 aa).

The interval 4-184 (ADRIISASPQ…FGIVQRLEFY (181 aa)) is large ATPase domain (RuvB-L). ATP-binding positions include Ile23, Arg24, Gly65, Lys68, Thr69, Thr70, 131–133 (EDY), Arg174, Tyr184, and Arg221. Thr69 is a binding site for Mg(2+). The tract at residues 185–255 (NVDDLTSIVK…IAKQALVMLD (71 aa)) is small ATPAse domain (RuvB-S). Residues 258-334 (PQGFDFMDIK…YAHLGISLSE (77 aa)) are head domain (RuvB-H). Residues Arg294, Arg313, and Arg318 each coordinate DNA.

The protein belongs to the RuvB family. As to quaternary structure, homohexamer. Forms an RuvA(8)-RuvB(12)-Holliday junction (HJ) complex. HJ DNA is sandwiched between 2 RuvA tetramers; dsDNA enters through RuvA and exits via RuvB. An RuvB hexamer assembles on each DNA strand where it exits the tetramer. Each RuvB hexamer is contacted by two RuvA subunits (via domain III) on 2 adjacent RuvB subunits; this complex drives branch migration. In the full resolvosome a probable DNA-RuvA(4)-RuvB(12)-RuvC(2) complex forms which resolves the HJ.

The protein resides in the cytoplasm. It carries out the reaction ATP + H2O = ADP + phosphate + H(+). Its function is as follows. The RuvA-RuvB-RuvC complex processes Holliday junction (HJ) DNA during genetic recombination and DNA repair, while the RuvA-RuvB complex plays an important role in the rescue of blocked DNA replication forks via replication fork reversal (RFR). RuvA specifically binds to HJ cruciform DNA, conferring on it an open structure. The RuvB hexamer acts as an ATP-dependent pump, pulling dsDNA into and through the RuvAB complex. RuvB forms 2 homohexamers on either side of HJ DNA bound by 1 or 2 RuvA tetramers; 4 subunits per hexamer contact DNA at a time. Coordinated motions by a converter formed by DNA-disengaged RuvB subunits stimulates ATP hydrolysis and nucleotide exchange. Immobilization of the converter enables RuvB to convert the ATP-contained energy into a lever motion, pulling 2 nucleotides of DNA out of the RuvA tetramer per ATP hydrolyzed, thus driving DNA branch migration. The RuvB motors rotate together with the DNA substrate, which together with the progressing nucleotide cycle form the mechanistic basis for DNA recombination by continuous HJ branch migration. Branch migration allows RuvC to scan DNA until it finds its consensus sequence, where it cleaves and resolves cruciform DNA. In Haemophilus ducreyi (strain 35000HP / ATCC 700724), this protein is Holliday junction branch migration complex subunit RuvB.